The chain runs to 137 residues: Histone H2B (137 aa).

Basic and acidic residues predominate over residues M1–P10. Residues M1–K45 are disordered. N6-acetyllysine; alternate occurs at positions 8 and 9. Glycyl lysine isopeptide (Lys-Gly) (interchain with G-Cter in SUMO); alternate cross-links involve residues K8 and K9. K13 carries the N6-acetyllysine modification. N6-acetyllysine; alternate is present on K24. A Glycyl lysine isopeptide (Lys-Gly) (interchain with G-Cter in SUMO); alternate cross-link involves residue K24. K25 is covalently cross-linked (Glycyl lysine isopeptide (Lys-Gly) (interchain with G-Cter in SUMO)). A Glycyl lysine isopeptide (Lys-Gly) (interchain with G-Cter in ubiquitin) cross-link involves residue K131.

The protein belongs to the histone H2B family. The nucleosome is a histone octamer containing two molecules each of H2A, H2B, H3 and H4 assembled in one H3-H4 heterotetramer and two H2A-H2B heterodimers. The octamer wraps approximately 147 bp of DNA. Monoubiquitinated to form H2BK123ub1. H2BK123ub1 gives a specific tag for epigenetic transcriptional activation and is also prerequisite for H3K4me and H3K79me formation. H2BK123ub1 also modulates the formation of double-strand breaks during meiosis and is a prerequisite for DNA-damage checkpoint activation. In terms of processing, acetylated by GCN5 to form H2BK11ac and H2BK16ac. H2BK16ac can also be formed by ESA1. Acetylation of N-terminal lysines and particularly formation of H2BK11acK16ac has a positive effect on transcription. Post-translationally, sumoylation to form H2BK6su or H2BK7su, and probably also H2BK16su or H2BK17su, occurs preferentially near the telomeres and represses gene transcription.

Its subcellular location is the nucleus. It is found in the chromosome. Core component of nucleosome. Nucleosomes wrap and compact DNA into chromatin, limiting DNA accessibility to the cellular machineries which require DNA as a template. Histones thereby play a central role in transcription regulation, DNA repair, DNA replication and chromosomal stability. DNA accessibility is regulated via a complex set of post-translational modifications of histones, also called histone code, and nucleosome remodeling. The chain is Histone H2B (HTB1) from Podospora anserina (Pleurage anserina).